The sequence spans 688 residues: MKTRQNKYSIRKFSVGASSILIAALLFMGGGSAQAAEQQQDKGTVENSTTQSIGDGNEKLSEQQSTQNKNVNEKSNVNSITENESLHNETPKNEDWIQQQKDSQNDNKSESVVEQNKENEAFVQNHSEEKPQQEQVELEKHASENNQTLHSKAAQSNEDVKTKPSQLDNTAAKQEDSQKENLSKQDTQSSKTTDLLRATAQNQSKDSQSTEEINKEVNNDTQQVTAKNDDAKVESFNLNSKEEPLKVDKQANPTTDKDKSSKNDKGSQDGLANLESNAVATTNKQSKQQVSEKNEDQTNKSAKQKQYKNNDPIILVHGFNGFTDDINPSVLTHYWGGDKMNIRQDLEENGYEAYEASISAFGSNYDRAVELYYYIKGGRVDYGAAHAAKYGHERYGKTYEGVYKDWKPGQKIHLVGHSMGGQTIRQLEELLRHGNPEEVEYQKQHGGEISPLYQGGHDNMVSSITTLGTPHNGTHASDLLGNEAIVRQLAYDVGKMYGNKDSRVDFGLEHWGLKQKPNESYIQYVKRVQNSKLWKSKDSGLHDLTRDGATDLNRKTSLNPNIVYKTYTGESTHKTLAGKQKADLNMFLPFTITGNLIGKAKEKEWRENDGLVSVISSQHPFNQKYVEATDKNQKGVWQVTPTKHDWDHVDFVGQDSTDTKRTRDELQQFWHGLAEDLVQSEQLTSTNK.

The N-terminal stretch at M1–A35 is a signal peptide. The disordered stretch occupies residues G31–N309. Residues A36–A302 constitute a propeptide, removed in mature form. A compositionally biased stretch (polar residues) spans V45 to G54. Positions N68–S79 are enriched in low complexity. Composition is skewed to basic and acidic residues over residues E84–D95 and S103–S143. Over residues E144 to A172 the composition is skewed to polar residues. Residues K173–S183 are compositionally biased toward basic and acidic residues. Residues K184–E211 show a composition bias toward polar residues. A compositionally biased stretch (basic and acidic residues) spans S240–S267. The span at L274–Q289 shows a compositional bias: polar residues. S418 functions as the Nucleophile in the catalytic mechanism. D609 acts as the Charge relay system in catalysis. Position 647 (D647) interacts with Ca(2+). H648 functions as the Charge relay system in the catalytic mechanism. The Ca(2+) site is built by D650, D655, and D658.

Belongs to the AB hydrolase superfamily. Lipase family.

The protein resides in the secreted. The catalysed reaction is a triacylglycerol + H2O = a diacylglycerol + a fatty acid + H(+). This chain is Lipase (lip), found in Staphylococcus epidermidis (strain ATCC 12228 / FDA PCI 1200).